Reading from the N-terminus, the 102-residue chain is Envelope protein US9 (102 aa).

Residues 1–75 (MAGQNTMEGE…KIYHRKKFCY (75 aa)) lie on the Intravirion side of the membrane. The short motif at 14 to 15 (LL) is the Di-leucine internalization motif element. The interval 41 to 55 (EKCYYSDSENETADE) is acidic. Phosphoserine; by host CK2 is present on residues Ser46 and Ser48. The chain crosses the membrane as a helical; Signal-anchor for type II membrane protein span at residues 76–96 (ITLIIVFVFAMTGAAFALGYI). Residues 97–102 (TSQFVG) are Virion surface-facing.

It belongs to the alphaherpesvirinae envelope protein US9 family. Post-translationally, phosphorylated on serines within the acidic cluster, possibly by host CK2. Phosphorylation determines whether endocytosed viral US9 traffics to the trans-Golgi network or recycles to the cell membrane.

Its subcellular location is the virion membrane. The protein resides in the host Golgi apparatus membrane. It is found in the host Golgi apparatus. The protein localises to the host trans-Golgi network. It localises to the host cell membrane. Essential for the anterograde spread of the infection throughout the host nervous system. Together with the gE/gI heterodimer, US9 is involved in the sorting and transport of viral structural components toward axon tips. In Varicella-zoster virus (strain Dumas) (HHV-3), this protein is Envelope protein US9.